The sequence spans 412 residues: Putative competence-damage inducible protein (412 aa).

It belongs to the CinA family.

This Clostridium perfringens (strain SM101 / Type A) protein is Putative competence-damage inducible protein.